We begin with the raw amino-acid sequence, 92 residues long: MARSIKKGPFVDDHLMKKVEAQDGSEKKQVIKTWSRRSTIFPNFIGHTFAVYDGRKHVPVYVTEDMVGHKLGEFAPTRTFKGHAADDKKTRR.

Belongs to the universal ribosomal protein uS19 family.

Functionally, protein S19 forms a complex with S13 that binds strongly to the 16S ribosomal RNA. In Staphylococcus epidermidis (strain ATCC 35984 / DSM 28319 / BCRC 17069 / CCUG 31568 / BM 3577 / RP62A), this protein is Small ribosomal subunit protein uS19.